The primary structure comprises 222 residues: uncharacterized protein (222 aa).

Residues Ile-7–Gln-26 form a helical membrane-spanning segment. One can recognise an SPOR domain in the interval Cys-139 to Lys-222.

Its subcellular location is the membrane. This is an uncharacterized protein from Rickettsia prowazekii (strain Madrid E).